The chain runs to 493 residues: Guanosine-5'-triphosphate,3'-diphosphate pyrophosphatase (493 aa).

This sequence belongs to the GppA/Ppx family. GppA subfamily.

The catalysed reaction is guanosine 3'-diphosphate 5'-triphosphate + H2O = guanosine 3',5'-bis(diphosphate) + phosphate + H(+). Its pathway is purine metabolism; ppGpp biosynthesis; ppGpp from GTP: step 2/2. Functionally, catalyzes the conversion of pppGpp to ppGpp. Guanosine pentaphosphate (pppGpp) is a cytoplasmic signaling molecule which together with ppGpp controls the 'stringent response', an adaptive process that allows bacteria to respond to amino acid starvation, resulting in the coordinated regulation of numerous cellular activities. The polypeptide is Guanosine-5'-triphosphate,3'-diphosphate pyrophosphatase (Salmonella paratyphi A (strain ATCC 9150 / SARB42)).